Here is a 733-residue protein sequence, read N- to C-terminus: Photosystem I P700 chlorophyll a apoprotein A2 (733 aa).

The next 8 membrane-spanning stretches (helical) occupy residues 46–69 (IFASHFGHLAVIFLWTAGNLFHVA), 134–157 (LYLGSVGLLILASVLLFAGWLHLQ), 174–198 (LNHHLSGLLGVSSLAWTGHIVHVAI), 272–290 (IAHHQLAIAVVFIVAGHMY), 329–352 (LHMQLGLALACLGVATSLTAQHMY), 368–394 (AALYTHHQYIAGFLMVGAFAHGAIFFV), 416–438 (AIISHLSWASLFLGFHTLGLYIH), and 516–534 (FLVHHAIALGLHTTTLILV). Residues cysteine 558 and cysteine 567 each contribute to the [4Fe-4S] cluster site. Helical transmembrane passes span 574-595 (AFYLAMFWMLNTIGWVTFYWHW) and 642-664 (LSVWAWMFLFGHLIWATGFMFLI). 3 residues coordinate chlorophyll a: histidine 653, methionine 661, and tyrosine 669. Tryptophan 670 is a phylloquinone binding site. A helical membrane pass occupies residues 706-726 (LVGLVHFTVGYVLTYAAFVIA).

Belongs to the PsaA/PsaB family. In terms of assembly, the PsaA/B heterodimer binds the P700 chlorophyll special pair and subsequent electron acceptors. PSI consists of a core antenna complex that captures photons, and an electron transfer chain that converts photonic excitation into a charge separation. The eukaryotic PSI reaction center is composed of at least 11 subunits. The cofactor is P700 is a chlorophyll a/chlorophyll a' dimer, A0 is one or more chlorophyll a, A1 is one or both phylloquinones and FX is a shared 4Fe-4S iron-sulfur center..

The protein resides in the plastid. It is found in the chloroplast thylakoid membrane. The enzyme catalyses reduced [plastocyanin] + hnu + oxidized [2Fe-2S]-[ferredoxin] = oxidized [plastocyanin] + reduced [2Fe-2S]-[ferredoxin]. PsaA and PsaB bind P700, the primary electron donor of photosystem I (PSI), as well as the electron acceptors A0, A1 and FX. PSI is a plastocyanin/cytochrome c6-ferredoxin oxidoreductase, converting photonic excitation into a charge separation, which transfers an electron from the donor P700 chlorophyll pair to the spectroscopically characterized acceptors A0, A1, FX, FA and FB in turn. Oxidized P700 is reduced on the lumenal side of the thylakoid membrane by plastocyanin or cytochrome c6. This is Photosystem I P700 chlorophyll a apoprotein A2 from Phaeodactylum tricornutum (strain CCAP 1055/1).